The primary structure comprises 286 residues: ATP synthase gamma chain (286 aa).

Belongs to the ATPase gamma chain family. In terms of assembly, F-type ATPases have 2 components, CF(1) - the catalytic core - and CF(0) - the membrane proton channel. CF(1) has five subunits: alpha(3), beta(3), gamma(1), delta(1), epsilon(1). CF(0) has three main subunits: a, b and c.

Its subcellular location is the cell inner membrane. Produces ATP from ADP in the presence of a proton gradient across the membrane. The gamma chain is believed to be important in regulating ATPase activity and the flow of protons through the CF(0) complex. The polypeptide is ATP synthase gamma chain (Pseudomonas syringae pv. tomato (strain ATCC BAA-871 / DC3000)).